A 328-amino-acid polypeptide reads, in one-letter code: Malate dehydrogenase 2 (328 aa).

12–18 is an NAD(+) binding site; sequence GAAGQIA. Substrate contacts are provided by arginine 93 and arginine 99. NAD(+) is bound by residues asparagine 106, glutamine 113, and 130 to 132; that span reads VGN. Substrate-binding residues include asparagine 132 and arginine 163. The active-site Proton acceptor is histidine 188.

Belongs to the LDH/MDH superfamily. MDH type 2 family.

It carries out the reaction (S)-malate + NAD(+) = oxaloacetate + NADH + H(+). Functionally, catalyzes the reversible oxidation of malate to oxaloacetate. This chain is Malate dehydrogenase 2, found in Burkholderia vietnamiensis (strain G4 / LMG 22486) (Burkholderia cepacia (strain R1808)).